A 364-amino-acid polypeptide reads, in one-letter code: Aminomethyltransferase (364 aa).

It belongs to the GcvT family. As to quaternary structure, the glycine cleavage system is composed of four proteins: P, T, L and H.

The enzyme catalyses N(6)-[(R)-S(8)-aminomethyldihydrolipoyl]-L-lysyl-[protein] + (6S)-5,6,7,8-tetrahydrofolate = N(6)-[(R)-dihydrolipoyl]-L-lysyl-[protein] + (6R)-5,10-methylene-5,6,7,8-tetrahydrofolate + NH4(+). The glycine cleavage system catalyzes the degradation of glycine. The chain is Aminomethyltransferase from Shewanella baltica (strain OS155 / ATCC BAA-1091).